A 260-amino-acid polypeptide reads, in one-letter code: Taurine import ATP-binding protein TauB (260 aa).

One can recognise an ABC transporter domain in the interval 6-235; it reads AHQVSVVYAS…RYAAGESMRS (230 aa). Residue 40-47 coordinates ATP; that stretch reads GASGCGKS.

Belongs to the ABC transporter superfamily. Taurine importer (TC 3.A.1.17.1) family. In terms of assembly, the complex is composed of two ATP-binding proteins (TauB), two transmembrane proteins (TauC) and a solute-binding protein (TauA).

Its subcellular location is the cell inner membrane. The enzyme catalyses taurine(out) + ATP + H2O = taurine(in) + ADP + phosphate + H(+). In terms of biological role, part of the ABC transporter complex TauABC involved in taurine import. Responsible for energy coupling to the transport system. This Burkholderia thailandensis (strain ATCC 700388 / DSM 13276 / CCUG 48851 / CIP 106301 / E264) protein is Taurine import ATP-binding protein TauB.